The following is a 112-amino-acid chain: Histone H2A, sperm (112 aa).

Gln91 bears the N5-methylglutamine mark. Lys106 participates in a covalent cross-link: Glycyl lysine isopeptide (Lys-Gly) (interchain with G-Cter in ubiquitin).

It belongs to the histone H2A family. In terms of assembly, the nucleosome is a histone octamer containing two molecules each of H2A, H2B, H3 and H4 assembled in one H3-H4 heterotetramer and two H2A-H2B heterodimers. The octamer wraps approximately 147 bp of DNA. Post-translationally, monoubiquitination gives a specific tag for epigenetic transcriptional repression.

It is found in the nucleus. The protein resides in the chromosome. Its function is as follows. Core component of nucleosome. Nucleosomes wrap and compact DNA into chromatin, limiting DNA accessibility to the cellular machineries which require DNA as a template. Histones thereby play a central role in transcription regulation, DNA repair, DNA replication and chromosomal stability. DNA accessibility is regulated via a complex set of post-translational modifications of histones, also called histone code, and nucleosome remodeling. The chain is Histone H2A, sperm from Lytechinus pictus (Painted sea urchin).